Here is a 753-residue protein sequence, read N- to C-terminus: MALNSEVMFREQINAMRSQAGRKRATSLQSFCSGNTDDSSADSTDNMDMMVDYPQQKGVSCMRARFNSESTLSKSFRKKVKKLAQKDRRSKERLNGNSEEDAIEVPRGAPSTYAAPSKLRKSKALDCLVSEKPKDEGRSEDSGHGADIEMAKGHFNDVRMKVFAARTAMQVEPALVMKTRKALEMKNAVLENHQSPGAFSLHAAYKIAASAESRVGSITPCNKKVTKEAMANLIRSSYDDTEITQELLFSSKFDSKWKGRYTDIYMRRDENGKKPKRPVNGQGWVMPLKSICEKFGINSTFFTNHRIDLKSARDQVLLMRLLSHDQTSTWISDIHPEAVKNETLAEYLLRELDASTMQKRVQAFKANVLADRDRVRVAGQFYNNIRIGKRMFGAARKAKYLSTIIGGMERRFEILENSVNHIPFTHSASDNNQEKCRNPRVHCRDSTRIALQFPRGQYLGDFIHANRISGKPLFNEFIMTQAPMKNTVDDFWRMVWQEEVPYIVMLTSRKEPERCEYYWPKSPSDPAVTVPGGLRIENFGVYQAPDPLFRVTHLRLIGPDREERHVEHWQGDVNNSSNMYSPLNILRLLRNASKPVVIHDHLGVSRAACLVAAEIAICSLLRGPTYKYPVQRAVQFLRQRRPFSIETPMQYIFVHRLVAFFFRDVIGSAKELDVDYERWLQERSERMFLDDLAAPIPGYRLLSPRADPDIVRMVGRPERPNYRREAPDCVGEMPNKVAAVDGILSPAKSVFEF.

2 disordered regions span residues 26–46 and 77–116; these read TSLQ…STDN and RKKV…YAAP. Over residues 35-46 the composition is skewed to low complexity; the sequence is NTDDSSADSTDN. A compositionally biased stretch (basic and acidic residues) spans 84–94; sequence AQKDRRSKERL. One can recognise a Tyrosine-protein phosphatase domain in the interval 408–661; it reads MERRFEILEN…IFVHRLVAFF (254 aa).

This sequence belongs to the protein-tyrosine phosphatase family. Part of a complex, consisting of pseudophosphatases egg-3, egg-4, egg-5 and kinase mbk-2; this complex is required for the oocyte-to-zygote transition. Interacts (via tyrosine-protein phosphatase domain) with kinase mbk-2 (via 'Tyr-619' and 'Tyr-621'); mbk-2 tyrosine phosphorylation enhances the interaction.

The protein localises to the cytoplasm. Its subcellular location is the cell cortex. Inactive phosphatase which acts redundantly with egg-4 in the oocyte-to-zygote transition. Required for polarized cortical actin cytoskeleton rearrangement in the oocyte before and after fertilization. Together with egg-4, required for the cortical localization of kinase mbk-2 in maturing oocyte until the end of meiosis I. Also required for kinase mbk-2, pseudophosphatase egg-3 and chitin synthase chs-1 localization to cytoplasmic foci after fertilization. The polypeptide is Inactive protein-tyrosine phosphatase egg-5 (Caenorhabditis elegans).